A 233-amino-acid polypeptide reads, in one-letter code: Glucosamine-6-phosphate deaminase (233 aa).

Asp62 acts as the Proton acceptor; for enolization step in catalysis. Catalysis depends on Asn128, which acts as the For ring-opening step. The active-site Proton acceptor; for ring-opening step is the His130. Glu135 serves as the catalytic For ring-opening step.

This sequence belongs to the glucosamine/galactosamine-6-phosphate isomerase family. NagB subfamily.

The catalysed reaction is alpha-D-glucosamine 6-phosphate + H2O = beta-D-fructose 6-phosphate + NH4(+). It functions in the pathway amino-sugar metabolism; N-acetylneuraminate degradation; D-fructose 6-phosphate from N-acetylneuraminate: step 5/5. In terms of biological role, catalyzes the reversible isomerization-deamination of glucosamine 6-phosphate (GlcN6P) to form fructose 6-phosphate (Fru6P) and ammonium ion. The protein is Glucosamine-6-phosphate deaminase of Streptococcus thermophilus (strain ATCC BAA-491 / LMD-9).